The chain runs to 598 residues: MQKTQEKKNMKEMEFFTEYGDANRYRILEVIGKGSYGVVCAAIDTQTGEKVAIKKINDVFEHVSDALRILREVKLLRLLRHPDIVEIKSIMLPPSKREFKDIYVVFELMESDLHQVIKANDDLTREHHQFFLYQMLRALKYMHTANVYHRDLKPKNILANANCKLKVCDFGLARVSFNDTPTTVFWTDYVATRWYRAPELCGSFCSKYTPAIDIWSIGCIFAEVLTGKPLFPGKSVVHQLDLITDLLGTPKSETIAGVRNEKARKYLNEMRKKNLVPFSQKFPNADPLALRLLQRLLAFDPKDRPTAAEALADPYFKCLAKVEREPSCQPISKMEFEFERRRLTKDDIRELIYREILEYHPQLLKDYMNSEGSSFLYPSAIGHLRKQFAYLEENSGKSGPVIPPDRKHASLPRSAVHSSAVNSNAQPSLNASDSRRVSIEPSRNGVVPSTSAYSTKPLGPPPRVPSGKPGRVVESSVTYENDRNLKESSYDARTSYYRSTVLPPQTVSPNCYFLPNTMNQEKRSGTEAASQPKPQFVPTQCNSAKPAELNPNPYVQSQHKVGIDAKLLHAQSQYGPAGAAAVAVAAHRNIGAVGYGMS.

The region spanning 25 to 316 (YRILEVIGKG…AAEALADPYF (292 aa)) is the Protein kinase domain. ATP-binding positions include 31–39 (IGKGSYGVV) and Lys-54. Asp-151 functions as the Proton acceptor in the catalytic mechanism. Position 187 is a phosphothreonine (Thr-187). The TXY motif lies at 187–189 (TDY). Tyr-189 bears the Phosphotyrosine mark. Position 192 is a phosphothreonine (Thr-192). A disordered region spans residues 396–486 (GKSGPVIPPD…VTYENDRNLK (91 aa)). Over residues 414–425 (SAVHSSAVNSNA) the composition is skewed to low complexity.

This sequence belongs to the protein kinase superfamily. CMGC Ser/Thr protein kinase family. MAP kinase subfamily. In terms of processing, dually phosphorylated on Thr-187 and Tyr-189, which activates the enzyme.

The enzyme catalyses L-seryl-[protein] + ATP = O-phospho-L-seryl-[protein] + ADP + H(+). It carries out the reaction L-threonyl-[protein] + ATP = O-phospho-L-threonyl-[protein] + ADP + H(+). With respect to regulation, activated by threonine and tyrosine phosphorylation. This is Mitogen-activated protein kinase 19 (MPK19) from Arabidopsis thaliana (Mouse-ear cress).